The following is a 384-amino-acid chain: ATP synthase subunit a (384 aa).

The segment at 22–60 (PAPAAAPVEQHGAPAPEAAAPDAHAAPAGEHGAAVEAHA) is disordered. Transmembrane regions (helical) follow at residues 131-151 (KHVM…LAAV), 189-209 (FVPY…FGLI), 218-238 (NLSV…YAAI), 258-278 (LAPL…TKPF), 293-313 (FVIL…VAFG), and 319-339 (LGIF…FTML). The interval 355 to 384 (HGHAEEHGHAGPGMGSEHGSHVAGASPGHG) is disordered.

Belongs to the ATPase A chain family. In terms of assembly, F-type ATPases have 2 components, CF(1) - the catalytic core - and CF(0) - the membrane proton channel. CF(1) has five subunits: alpha(3), beta(3), gamma(1), delta(1), epsilon(1). CF(0) has three main subunits: a(1), b(2) and c(9-12). The alpha and beta chains form an alternating ring which encloses part of the gamma chain. CF(1) is attached to CF(0) by a central stalk formed by the gamma and epsilon chains, while a peripheral stalk is formed by the delta and b chains.

It is found in the cell inner membrane. Functionally, key component of the proton channel; it plays a direct role in the translocation of protons across the membrane. This chain is ATP synthase subunit a, found in Anaeromyxobacter dehalogenans (strain 2CP-1 / ATCC BAA-258).